We begin with the raw amino-acid sequence, 1760 residues long: Cilia- and flagella-associated protein 44 (1760 aa).

WD repeat units lie at residues 119–160, 163–202, 213–251, 276–315, and 388–427; these read GATK…MVLR, CHNTDVYTVLFSPFDSGLLVSGGAGHIKFWTMANTFTGLK, LEISNVSGFVVLSDGKVISGSESGLIILWEGDLIRCCFA, CHEGAINVVELMEGGRVLMTAGDDGYFRFWRVSELEVAEG, and FNGGSITSAALSPIDHTVVTGGEDGTIRLVDYVTPRELYK. The span at 1155–1165 shows a compositional bias: basic and acidic residues; that stretch reads RQEEKLREQTA. The interval 1155–1224 is disordered; it reads RQEEKLREQT…FGTAAARTRS (70 aa). The segment covering 1181–1190 has biased composition (polar residues); it reads PATNTDTSGA. Residues 1194-1205 show a composition bias toward basic and acidic residues; it reads ATRRSEGEDSRK. The stretch at 1348–1389 forms a coiled coil; the sequence is YDEARNSRDRCLREMEELQRLVQDQTASIEKLQEANKVFRRE. Residues 1420 to 1444 are disordered; it reads HSDMSGNDDDITSDDDDDDDMGEDE. A compositionally biased stretch (acidic residues) spans 1425–1444; it reads GNDDDITSDDDDDDDMGEDE.

The protein belongs to the CFAP44 family.

The protein resides in the cell projection. The protein localises to the cilium. It is found in the flagellum. It localises to the cytoplasm. Its subcellular location is the cytoskeleton. The protein resides in the flagellum axoneme. Functionally, flagellar protein involved in flagellum axoneme organization and function. This is Cilia- and flagella-associated protein 44 from Trypanosoma brucei brucei (strain 927/4 GUTat10.1).